The chain runs to 238 residues: ATP synthase subunit a (238 aa).

The next 5 membrane-spanning stretches (helical) occupy residues 17-37 (LSNI…AIIC), 75-95 (FHVL…LGLP), 112-132 (DPIV…YYGI), 172-192 (YGNI…LAHI), and 194-214 (IFVG…SLFI).

The protein belongs to the ATPase A chain family. F-type ATPases have 2 components, CF(1) - the catalytic core - and CF(0) - the membrane proton channel. CF(1) has five subunits: alpha(3), beta(3), gamma(1), delta(1), epsilon(1). CF(0) has three main subunits: a(1), b(2) and c(9-12). The alpha and beta chains form an alternating ring which encloses part of the gamma chain. CF(1) is attached to CF(0) by a central stalk formed by the gamma and epsilon chains, while a peripheral stalk is formed by the delta and b chains.

Its subcellular location is the cell membrane. Functionally, key component of the proton channel; it plays a direct role in the translocation of protons across the membrane. The protein is ATP synthase subunit a of Listeria monocytogenes serovar 1/2a (strain ATCC BAA-679 / EGD-e).